The sequence spans 198 residues: Holliday junction branch migration complex subunit RuvA (198 aa).

Positions Met1 to Asp64 are domain I. Residues Ser65 to Glu143 are domain II. The flexible linker stretch occupies residues Ile144–Asn149. A domain III region spans residues Glu150–Gly198.

It belongs to the RuvA family. Homotetramer. Forms an RuvA(8)-RuvB(12)-Holliday junction (HJ) complex. HJ DNA is sandwiched between 2 RuvA tetramers; dsDNA enters through RuvA and exits via RuvB. An RuvB hexamer assembles on each DNA strand where it exits the tetramer. Each RuvB hexamer is contacted by two RuvA subunits (via domain III) on 2 adjacent RuvB subunits; this complex drives branch migration. In the full resolvosome a probable DNA-RuvA(4)-RuvB(12)-RuvC(2) complex forms which resolves the HJ.

Its subcellular location is the cytoplasm. Functionally, the RuvA-RuvB-RuvC complex processes Holliday junction (HJ) DNA during genetic recombination and DNA repair, while the RuvA-RuvB complex plays an important role in the rescue of blocked DNA replication forks via replication fork reversal (RFR). RuvA specifically binds to HJ cruciform DNA, conferring on it an open structure. The RuvB hexamer acts as an ATP-dependent pump, pulling dsDNA into and through the RuvAB complex. HJ branch migration allows RuvC to scan DNA until it finds its consensus sequence, where it cleaves and resolves the cruciform DNA. In Clostridium beijerinckii (strain ATCC 51743 / NCIMB 8052) (Clostridium acetobutylicum), this protein is Holliday junction branch migration complex subunit RuvA.